Consider the following 426-residue polypeptide: Serine--tRNA ligase (426 aa).

233 to 235 (TAE) is a binding site for L-serine. 264–266 (RSE) contributes to the ATP binding site. E287 contributes to the L-serine binding site. ATP is bound at residue 351-354 (EISS). S387 contributes to the L-serine binding site.

It belongs to the class-II aminoacyl-tRNA synthetase family. Type-1 seryl-tRNA synthetase subfamily. As to quaternary structure, homodimer. The tRNA molecule binds across the dimer.

The protein localises to the cytoplasm. It carries out the reaction tRNA(Ser) + L-serine + ATP = L-seryl-tRNA(Ser) + AMP + diphosphate + H(+). The enzyme catalyses tRNA(Sec) + L-serine + ATP = L-seryl-tRNA(Sec) + AMP + diphosphate + H(+). It participates in aminoacyl-tRNA biosynthesis; selenocysteinyl-tRNA(Sec) biosynthesis; L-seryl-tRNA(Sec) from L-serine and tRNA(Sec): step 1/1. Catalyzes the attachment of serine to tRNA(Ser). Is also able to aminoacylate tRNA(Sec) with serine, to form the misacylated tRNA L-seryl-tRNA(Sec), which will be further converted into selenocysteinyl-tRNA(Sec). The protein is Serine--tRNA ligase of Pseudomonas aeruginosa (strain LESB58).